A 1105-amino-acid chain; its full sequence is Probable diguanylate cyclase DgcE (1105 aa).

Helical transmembrane passes span 9–29 (LIALPHPLLHLVSLGLVSFIF), 38–58 (QFGTQLAPLWFPTSIMMVAFY), 64–84 (MWPGIALSCSLGNIAASILLF), 88–108 (SLNMTWTTINIVEAVVGAVLL), 127–147 (LALGSAIVPPLLGGVLVVLLT), 156–176 (FLIWVLSESIGALALVPLGLL), 190–207 (LLFESLLTLAITLTLSWL), 211–228 (YLPWPFTFIIVLLMWSAV), 236–256 (FLIFLTTVMMVSLMMAADPSL), and 270–290 (WLPFLLILLPANIMTMVMYAF). The region spanning 300 to 370 (SETHFRNAME…QQVEKLISGE (71 aa)) is the PAS 1 domain. PAC domains follow at residues 374–426 (YSME…VNQQ) and 501–552 (FKLE…ALFQ). In terms of domain architecture, PAS 2 spans 553-623 (EKERLHITLD…LMENIYSADT (71 aa)). Positions 626 to 680 (SAIEQDVVLHCRSGGSYDVHYSITPLSTLDGSNIGSVLVIQDVTESRKMLRQLSY) constitute a PAC 3 domain. Residues 712–845 (QRHALVFIDL…GRGRVTVYEP (134 aa)) form the GGDEF domain. Asp720 is a Mg(2+) binding site. Substrate-binding residues include Asn728, His733, and Asp737. Residue Asp763 participates in Mg(2+) binding. Asp763 acts as the Proton acceptor in catalysis. Residue Arg783 participates in substrate binding. An EAL domain is found at 855–1104 (AAMSLDEQWR…LLVNSSYFAI (250 aa)).

Homodimer. It depends on Mg(2+) as a cofactor.

It localises to the cell inner membrane. It carries out the reaction 2 GTP = 3',3'-c-di-GMP + 2 diphosphate. The protein operates within purine metabolism; 3',5'-cyclic di-GMP biosynthesis. Functionally, catalyzes the synthesis of cyclic-di-GMP (c-di-GMP) via the condensation of 2 GTP molecules. Involved in the control of the switch from cell motility to adhesion via regulation of cellular levels of c-di-GMP. Part of a signaling cascade that regulates curli biosynthesis. The cascade is composed of two c-di-GMP control modules, in which c-di-GMP controlled by the DgcE/PdeH pair (module I) regulates the activity of the DgcM/PdeR pair (module II), which in turn regulates activity of the transcription factor MlrA and expression of the master biofilm regulator csgD. In Escherichia coli (strain K12), this protein is Probable diguanylate cyclase DgcE.